Consider the following 500-residue polypeptide: Na(+)/H(+) antiporter NhaB (500 aa).

11 helical membrane passes run phenylalanine 13–proline 33, isoleucine 34–phenylalanine 54, cysteine 62–serine 82, isoleucine 97–isoleucine 117, isoleucine 129–leucine 149, phenylalanine 242–isoleucine 262, glycine 306–valine 326, phenylalanine 350–isoleucine 370, proline 392–alanine 412, valine 449–leucine 469, and methionine 477–threonine 497.

Belongs to the NhaB Na(+)/H(+) (TC 2.A.34) antiporter family.

It localises to the cell inner membrane. The enzyme catalyses 2 Na(+)(in) + 3 H(+)(out) = 2 Na(+)(out) + 3 H(+)(in). Its function is as follows. Na(+)/H(+) antiporter that extrudes sodium in exchange for external protons. This is Na(+)/H(+) antiporter NhaB from Marinomonas sp. (strain MWYL1).